A 245-amino-acid chain; its full sequence is 1-(5-phosphoribosyl)-5-[(5-phosphoribosylamino)methylideneamino] imidazole-4-carboxamide isomerase (245 aa).

Residue aspartate 7 is the Proton acceptor of the active site. Aspartate 129 functions as the Proton donor in the catalytic mechanism.

This sequence belongs to the HisA/HisF family.

Its subcellular location is the cytoplasm. The enzyme catalyses 1-(5-phospho-beta-D-ribosyl)-5-[(5-phospho-beta-D-ribosylamino)methylideneamino]imidazole-4-carboxamide = 5-[(5-phospho-1-deoxy-D-ribulos-1-ylimino)methylamino]-1-(5-phospho-beta-D-ribosyl)imidazole-4-carboxamide. It functions in the pathway amino-acid biosynthesis; L-histidine biosynthesis; L-histidine from 5-phospho-alpha-D-ribose 1-diphosphate: step 4/9. In Klebsiella pneumoniae subsp. pneumoniae (strain ATCC 700721 / MGH 78578), this protein is 1-(5-phosphoribosyl)-5-[(5-phosphoribosylamino)methylideneamino] imidazole-4-carboxamide isomerase.